The primary structure comprises 458 residues: Argininosuccinate lyase (458 aa).

The protein belongs to the lyase 1 family. Argininosuccinate lyase subfamily.

It is found in the cytoplasm. It carries out the reaction 2-(N(omega)-L-arginino)succinate = fumarate + L-arginine. Its pathway is amino-acid biosynthesis; L-arginine biosynthesis; L-arginine from L-ornithine and carbamoyl phosphate: step 3/3. This Vibrio cholerae serotype O1 (strain ATCC 39541 / Classical Ogawa 395 / O395) protein is Argininosuccinate lyase.